A 275-amino-acid chain; its full sequence is MAARMGSKVAAILAILSVLVVHGSCKGHPVNYNVSDASAYGSGWLPARATWYGAPTGAGPDDNGGACGFKNVNQYPFSSMTSCGNEPIFKDGKGCGSCYQIRCNKDPSCSGNIETVIITDMNYYPVARYHFDLSGTAFGAMAKPGLNDKLRHSGIIDIQFRRVPCNYPGLKINFHVEEGSNPVYFAVLVEYEDLDGDVVQVDLMESKSAYGGATGVWTPMRESWGSIWRLDSNHRLQAPFSLRIRSDSGKTLVANNVIPANWSPNSNYRSIVQFS.

An N-terminal signal peptide occupies residues 1 to 25 (MAARMGSKVAAILAILSVLVVHGSC). The N-linked (GlcNAc...) asparagine glycan is linked to Asn-33. The region spanning 64-170 (GGACGFKNVN…RRVPCNYPGL (107 aa)) is the Expansin-like EG45 domain. 3 disulfides stabilise this stretch: Cys-67-Cys-95, Cys-98-Cys-165, and Cys-103-Cys-109. One can recognise an Expansin-like CBD domain in the interval 183–270 (VYFAVLVEYE…NWSPNSNYRS (88 aa)).

Belongs to the expansin family. Expansin B subfamily. As to expression, expressed in internodes.

The protein localises to the secreted. Its subcellular location is the cell wall. The protein resides in the membrane. May cause loosening and extension of plant cell walls by disrupting non-covalent bonding between cellulose microfibrils and matrix glucans. No enzymatic activity has been found. May be required for rapid internodal elongation in deepwater rice during submergence. The sequence is that of Expansin-B6 (EXPB6) from Oryza sativa subsp. japonica (Rice).